The chain runs to 285 residues: Iodotyrosine deiodinase 1 (285 aa).

Residues 1–21 (MFLLTPVLVAVVCILVVWVFK) traverse the membrane as a helical segment. FMN-binding positions include 96–100 (RRSVR) and 124–125 (SG). Residues alanine 126, glutamate 153, tyrosine 157, and lysine 178 each contribute to the 3,5-diiodo-L-tyrosine site. 4 residues coordinate 3-iodo-L-tyrosine: alanine 126, glutamate 153, tyrosine 157, and lysine 178. FMN contacts are provided by residues 233–235 (TTT) and arginine 275.

Belongs to the nitroreductase family. Homodimer. Requires FMN as cofactor.

Its subcellular location is the cell membrane. The protein resides in the cytoplasmic vesicle membrane. It catalyses the reaction 2 iodide + L-tyrosine + 2 NADP(+) = 3,5-diiodo-L-tyrosine + 2 NADPH + H(+). The enzyme catalyses iodide + L-tyrosine + NADP(+) = 3-iodo-L-tyrosine + NADPH. The catalysed reaction is 3-iodo-L-tyrosine + iodide + NADP(+) = 3,5-diiodo-L-tyrosine + NADPH + H(+). It carries out the reaction L-tyrosine + chloride + NADP(+) = 3-chloro-L-tyrosine + NADPH. It catalyses the reaction bromide + L-tyrosine + NADP(+) = 3-bromo-L-tyrosine + NADPH. Catalyzes the dehalogenation of halotyrosines such as 3-bromo-L-tyrosine, 3-chloro-L-tyrosine, 3-iodo-L-tyrosine and 3,5-diiodo-L-tyrosine. During thyroid hormone biosynthesis, facilitates iodide salvage by catalysing the oxidative NADPH-dependent deiodination of the halogenated by-products of thyroid hormone production, monoiodotyrosine (L-MIT) and diiodotyrosine (L-DIT). The scavanged iodide can then reenter the hormone-producing pathways. Acts more efficiently on 3-iodo-L-tyrosine than 3,5-diiodo-L-tyrosine. The sequence is that of Iodotyrosine deiodinase 1 (Iyd) from Mus musculus (Mouse).